A 96-amino-acid polypeptide reads, in one-letter code: UPF0125 protein YfjF (96 aa).

This sequence belongs to the UPF0125 (RnfH) family.

This Escherichia coli O157:H7 protein is UPF0125 protein YfjF (yfjF).